The sequence spans 224 residues: MNEKKAVILLSGGLDSATVVAMARDEGYACYTMSFDYGQRHRAELQAAERVAKQLAVVEHKVIGLNLNGIGGSALTDTSIDVPEAPSEGIPVTYVPARNTVFLSLALGWAEVLGARDIFIGVNAVDYSGYPDCRPEFVAAFERMANLATKAGVEGQGFRIQAPLQNLSKAQIVRKGSRLGVDYAMTVSCYQADDDGRACGKCDSCRLRSAGFAEAGLADPTRYF.

Residue 10–20 coordinates ATP; it reads LSGGLDSATVV. Zn(2+) is bound by residues Cys189, Cys199, Cys202, and Cys205.

It belongs to the QueC family. The cofactor is Zn(2+).

The catalysed reaction is 7-carboxy-7-deazaguanine + NH4(+) + ATP = 7-cyano-7-deazaguanine + ADP + phosphate + H2O + H(+). Its pathway is purine metabolism; 7-cyano-7-deazaguanine biosynthesis. In terms of biological role, catalyzes the ATP-dependent conversion of 7-carboxy-7-deazaguanine (CDG) to 7-cyano-7-deazaguanine (preQ(0)). The protein is 7-cyano-7-deazaguanine synthase of Stutzerimonas stutzeri (strain A1501) (Pseudomonas stutzeri).